We begin with the raw amino-acid sequence, 338 residues long: DNA-directed RNA polymerase subunit alpha (338 aa).

Over residues Met-1–Glu-10 the composition is skewed to polar residues. Residues Met-1 to Lys-24 form a disordered region. Positions Met-1–Glu-234 are alpha N-terminal domain (alpha-NTD). Residues Phe-250–Tyr-338 form an alpha C-terminal domain (alpha-CTD) region.

Belongs to the RNA polymerase alpha chain family. Homodimer. The RNAP catalytic core consists of 2 alpha, 1 beta, 1 beta' and 1 omega subunit. When a sigma factor is associated with the core the holoenzyme is formed, which can initiate transcription.

It carries out the reaction RNA(n) + a ribonucleoside 5'-triphosphate = RNA(n+1) + diphosphate. Its function is as follows. DNA-dependent RNA polymerase catalyzes the transcription of DNA into RNA using the four ribonucleoside triphosphates as substrates. The polypeptide is DNA-directed RNA polymerase subunit alpha (Rhodospirillum centenum (strain ATCC 51521 / SW)).